A 180-amino-acid chain; its full sequence is F17 fimbrial protein (180 aa).

The signal sequence occupies residues 1–21 (MQKIQFILGILAAASSSATLA). A disulfide bridge connects residues cysteine 37 and cysteine 77.

The protein belongs to the fimbrial protein family.

The protein resides in the fimbrium. Its function is as follows. Fimbriae (also called pili), polar filaments radiating from the surface of the bacterium to a length of 0.5-1.5 micrometers and numbering 100-300 per cell, enable bacteria to colonize the epithelium of specific host organs. The polypeptide is F17 fimbrial protein (F17a-A) (Escherichia coli).